The following is a 545-amino-acid chain: Chaperonin GroEL (545 aa).

ATP is bound by residues 31–34, 88–92, glycine 415, 478–480, and aspartate 494; these read TLGP, DGTTT, and NAA.

This sequence belongs to the chaperonin (HSP60) family. In terms of assembly, forms a cylinder of 14 subunits composed of two heptameric rings stacked back-to-back. Interacts with the co-chaperonin GroES.

It is found in the cytoplasm. It carries out the reaction ATP + H2O + a folded polypeptide = ADP + phosphate + an unfolded polypeptide.. In terms of biological role, together with its co-chaperonin GroES, plays an essential role in assisting protein folding. The GroEL-GroES system forms a nano-cage that allows encapsulation of the non-native substrate proteins and provides a physical environment optimized to promote and accelerate protein folding. This Streptococcus pyogenes serotype M4 (strain MGAS10750) protein is Chaperonin GroEL.